We begin with the raw amino-acid sequence, 94 residues long: Co-chaperonin GroES (94 aa).

It belongs to the GroES chaperonin family. In terms of assembly, heptamer of 7 subunits arranged in a ring. Interacts with the chaperonin GroEL.

It is found in the cytoplasm. Its function is as follows. Together with the chaperonin GroEL, plays an essential role in assisting protein folding. The GroEL-GroES system forms a nano-cage that allows encapsulation of the non-native substrate proteins and provides a physical environment optimized to promote and accelerate protein folding. GroES binds to the apical surface of the GroEL ring, thereby capping the opening of the GroEL channel. The chain is Co-chaperonin GroES from Latilactobacillus sakei subsp. sakei (strain 23K) (Lactobacillus sakei subsp. sakei).